The chain runs to 386 residues: Tubulin beta-1 chain (386 aa).

GTP contacts are provided by glutamate 7, serine 76, glycine 80, threonine 81, glycine 82, asparagine 142, and asparagine 164. Glutamate 7 provides a ligand contact to Mg(2+). Positions 363-386 are disordered; that stretch reads YQDATADEEGEYEDEEEDLQAEDM. The span at 367-386 shows a compositional bias: acidic residues; the sequence is TADEEGEYEDEEEDLQAEDM.

It belongs to the tubulin family. Dimer of alpha and beta chains. A typical microtubule is a hollow water-filled tube with an outer diameter of 25 nm and an inner diameter of 15 nM. Alpha-beta heterodimers associate head-to-tail to form protofilaments running lengthwise along the microtubule wall with the beta-tubulin subunit facing the microtubule plus end conferring a structural polarity. Microtubules usually have 13 protofilaments but different protofilament numbers can be found in some organisms and specialized cells. The cofactor is Mg(2+).

Its subcellular location is the cytoplasm. It is found in the cytoskeleton. Tubulin is the major constituent of microtubules, a cylinder consisting of laterally associated linear protofilaments composed of alpha- and beta-tubulin heterodimers. Microtubules grow by the addition of GTP-tubulin dimers to the microtubule end, where a stabilizing cap forms. Below the cap, tubulin dimers are in GDP-bound state, owing to GTPase activity of alpha-tubulin. The chain is Tubulin beta-1 chain (TUBB1) from Avena sativa (Oat).